A 372-amino-acid polypeptide reads, in one-letter code: Phospho-N-acetylmuramoyl-pentapeptide-transferase (372 aa).

A run of 10 helical transmembrane segments spans residues 21 to 41, 71 to 91, 98 to 118, 134 to 154, 176 to 196, 211 to 231, 251 to 271, 275 to 295, 300 to 320, and 349 to 369; these read SLTLRALLAVITALAFSMIFG, TPTMGGVLILSAIGVSTLLWA, VWILLIVMIIFGAVGWADDWL, YFWLSMGALFVGISLYYIATL, MIPFSAVPFGIGFIIFTYFVI, GLAILPVVLVAAGLGAMAYVS, VIIVCGAMIGAGLGFLWFNAH, VFMGDVGALSLGAMLGTIAVM, IAFAIMGGLFVAEALSVMLQV, and QVVARFWIIAIILVILGLMTL.

The protein belongs to the glycosyltransferase 4 family. MraY subfamily. The cofactor is Mg(2+).

The protein localises to the cell inner membrane. The enzyme catalyses UDP-N-acetyl-alpha-D-muramoyl-L-alanyl-gamma-D-glutamyl-meso-2,6-diaminopimeloyl-D-alanyl-D-alanine + di-trans,octa-cis-undecaprenyl phosphate = di-trans,octa-cis-undecaprenyl diphospho-N-acetyl-alpha-D-muramoyl-L-alanyl-D-glutamyl-meso-2,6-diaminopimeloyl-D-alanyl-D-alanine + UMP. Its pathway is cell wall biogenesis; peptidoglycan biosynthesis. Its function is as follows. Catalyzes the initial step of the lipid cycle reactions in the biosynthesis of the cell wall peptidoglycan: transfers peptidoglycan precursor phospho-MurNAc-pentapeptide from UDP-MurNAc-pentapeptide onto the lipid carrier undecaprenyl phosphate, yielding undecaprenyl-pyrophosphoryl-MurNAc-pentapeptide, known as lipid I. The protein is Phospho-N-acetylmuramoyl-pentapeptide-transferase of Psychrobacter arcticus (strain DSM 17307 / VKM B-2377 / 273-4).